Reading from the N-terminus, the 329-residue chain is Malate dehydrogenase (329 aa).

12-18 (GAAGQIG) contributes to the NAD(+) binding site. Substrate contacts are provided by arginine 93 and arginine 99. NAD(+) contacts are provided by residues asparagine 106, glutamine 113, and 130-132 (VGN). Residues asparagine 132 and arginine 163 each contribute to the substrate site. The active-site Proton acceptor is the histidine 188.

Belongs to the LDH/MDH superfamily. MDH type 2 family.

The catalysed reaction is (S)-malate + NAD(+) = oxaloacetate + NADH + H(+). In terms of biological role, catalyzes the reversible oxidation of malate to oxaloacetate. This chain is Malate dehydrogenase, found in Streptomyces griseus subsp. griseus (strain JCM 4626 / CBS 651.72 / NBRC 13350 / KCC S-0626 / ISP 5235).